The following is a 717-amino-acid chain: ATP-dependent zinc metalloprotease FtsH (717 aa).

Residues 1-9 (MKNASRIFK) lie on the Cytoplasmic side of the membrane. Residues 10-30 (GPLIWILLCIGLIIVFLQFAG) traverse the membrane as a helical segment. Residues 31-111 (SGNGYKDIPT…SWQGENPGQS (81 aa)) are Extracellular-facing. A helical transmembrane segment spans residues 112–132 (IWKALLINFLPFVIILLFFLW). The Cytoplasmic segment spans residues 133–717 (AMNAAQGMGG…NGNPWGPPRS (585 aa)). An ATP-binding site is contributed by 207-214 (GPPGTGKT). Position 429 (H429) interacts with Zn(2+). The active site involves E430. 2 residues coordinate Zn(2+): H433 and D505. The tract at residues 617-717 (AFTGSDKRVP…NGNPWGPPRS (101 aa)) is disordered. Residues 691–717 (PEPPSPTHPGEGPQPPSNGNPWGPPRS) show a composition bias toward pro residues.

The protein in the central section; belongs to the AAA ATPase family. This sequence in the C-terminal section; belongs to the peptidase M41 family. As to quaternary structure, homohexamer. The cofactor is Zn(2+).

The protein localises to the cell membrane. Acts as a processive, ATP-dependent zinc metallopeptidase for both cytoplasmic and membrane proteins. Plays a role in the quality control of integral membrane proteins. This chain is ATP-dependent zinc metalloprotease FtsH, found in Cutibacterium acnes (strain SK137) (Propionibacterium acnes).